A 1119-amino-acid polypeptide reads, in one-letter code: Isoleucine--tRNA ligase (1119 aa).

The segment at 1–43 (MVPRRSRQRPASSCRTAKTARREMPYPLPAPDGQEPEAQPVTP) is disordered. The 'HIGH' region signature appears at 84–94 (PFANGLPHYGH). The short motif at 676–680 (KVSKS) is the 'KMSKS' region element. Lys679 serves as a coordination point for ATP.

It belongs to the class-I aminoacyl-tRNA synthetase family. IleS type 2 subfamily. As to quaternary structure, monomer. Requires Zn(2+) as cofactor.

The protein localises to the cytoplasm. It carries out the reaction tRNA(Ile) + L-isoleucine + ATP = L-isoleucyl-tRNA(Ile) + AMP + diphosphate. Functionally, catalyzes the attachment of isoleucine to tRNA(Ile). As IleRS can inadvertently accommodate and process structurally similar amino acids such as valine, to avoid such errors it has two additional distinct tRNA(Ile)-dependent editing activities. One activity is designated as 'pretransfer' editing and involves the hydrolysis of activated Val-AMP. The other activity is designated 'posttransfer' editing and involves deacylation of mischarged Val-tRNA(Ile). The protein is Isoleucine--tRNA ligase of Leifsonia xyli subsp. xyli (strain CTCB07).